A 279-amino-acid chain; its full sequence is Rhamnulose-1-phosphate aldolase (279 aa).

Residue glutamate 115 is part of the active site. Zn(2+) is bound by residues histidine 138, histidine 140, and histidine 209.

The protein belongs to the aldolase class II family. RhaD subfamily. The cofactor is Zn(2+).

It is found in the cytoplasm. The enzyme catalyses L-rhamnulose 1-phosphate = (S)-lactaldehyde + dihydroxyacetone phosphate. It participates in carbohydrate degradation; L-rhamnose degradation; glycerone phosphate from L-rhamnose: step 3/3. In terms of biological role, catalyzes the reversible cleavage of L-rhamnulose-1-phosphate to dihydroxyacetone phosphate (DHAP) and L-lactaldehyde. This Enterococcus faecalis (strain ATCC 700802 / V583) protein is Rhamnulose-1-phosphate aldolase.